Reading from the N-terminus, the 421-residue chain is Gamma-glutamyl phosphate reductase (421 aa).

Belongs to the gamma-glutamyl phosphate reductase family.

The protein resides in the cytoplasm. The catalysed reaction is L-glutamate 5-semialdehyde + phosphate + NADP(+) = L-glutamyl 5-phosphate + NADPH + H(+). It participates in amino-acid biosynthesis; L-proline biosynthesis; L-glutamate 5-semialdehyde from L-glutamate: step 2/2. Functionally, catalyzes the NADPH-dependent reduction of L-glutamate 5-phosphate into L-glutamate 5-semialdehyde and phosphate. The product spontaneously undergoes cyclization to form 1-pyrroline-5-carboxylate. This Azotobacter vinelandii (strain DJ / ATCC BAA-1303) protein is Gamma-glutamyl phosphate reductase.